Here is a 489-residue protein sequence, read N- to C-terminus: Probable apyrase 1 (489 aa).

Residues 1-28 (MRRFSAAAGARQQQQQGEAVSDRVLRFR) lie on the Cytoplasmic side of the membrane. Residues 29-49 (GVLVVVLAPVLLISLVLLLMP) traverse the membrane as a helical; Signal-anchor for type II membrane protein segment. The Extracellular portion of the chain corresponds to 50–489 (RAPASATVEG…GSAIEVASSS (440 aa)). 89–99 (VIFDAGSSGSR) lines the ATP pocket. The active-site Proton acceptor is E211. Residue 235 to 245 (GVVDLGGGSVQ) coordinates ATP.

It belongs to the GDA1/CD39 NTPase family. It depends on Ca(2+) as a cofactor.

It is found in the membrane. It carries out the reaction a ribonucleoside 5'-triphosphate + 2 H2O = a ribonucleoside 5'-phosphate + 2 phosphate + 2 H(+). Functionally, catalyzes the hydrolysis of phosphoanhydride bonds of nucleoside tri- and di-phosphates. In Oryza sativa subsp. japonica (Rice), this protein is Probable apyrase 1 (APY1).